Consider the following 335-residue polypeptide: 3-hydroxyproline 2-epimerase (335 aa).

Cys-91 functions as the Proton acceptor in the catalytic mechanism. Substrate contacts are provided by residues 92 to 93 (GH), Asp-251, and 256 to 257 (GS).

The protein belongs to the proline racemase family.

It carries out the reaction trans-3-hydroxy-L-proline = cis-3-hydroxy-D-proline. The catalysed reaction is trans-4-hydroxy-L-proline = cis-4-hydroxy-D-proline. In terms of biological role, catalyzes the epimerization of trans-3-hydroxy-L-proline (t3LHyp) to cis-3-hydroxy-D-proline (c3DHyp) in vitro. Can also catalyze the epimerization of trans-4-hydroxy-L-proline (t3LHyp) to cis-4-hydroxy-D-proline (c4DHyp), albeit with 3.6-fold lower efficiency. Displays no proline racemase activity. The polypeptide is 3-hydroxyproline 2-epimerase (Burkholderia multivorans (strain ATCC 17616 / 249)).